The sequence spans 878 residues: Probable receptor-like protein kinase At4g39110 (878 aa).

Residues 1–43 form the signal peptide; sequence MEIRKKPNIFTVLVIDFSSKPSMALLLAILLFLSGPSASAVAA. The Extracellular portion of the chain corresponds to 44–440; that stretch reads AAVGPATGFK…GRTTGMGKHG (397 aa). 5 N-linked (GlcNAc...) asparagine glycosylation sites follow: asparagine 170, asparagine 183, asparagine 254, asparagine 317, and asparagine 382. A helical membrane pass occupies residues 441–461; that stretch reads MVATAGFVMMFGAFIGLGAMV. At 462 to 878 the chain is on the cytoplasmic side; sequence YKWKKRPQDW…FTQFANLNGR (417 aa). The 273-residue stretch at 526-798 folds into the Protein kinase domain; the sequence is FEASQIIGVG…GDVLWNLEYA (273 aa). Residues 532–540 and lysine 554 each bind ATP; that span reads IGVGGFGNV. Residue aspartate 650 is the Proton acceptor of the active site. A disordered region spans residues 808–844; it reads GKAEETENAKPDVVTPGSVPVSDPSPITPSVTTNEAA.

This sequence belongs to the protein kinase superfamily. Ser/Thr protein kinase family.

The protein localises to the membrane. The polypeptide is Probable receptor-like protein kinase At4g39110 (Arabidopsis thaliana (Mouse-ear cress)).